A 375-amino-acid chain; its full sequence is Phosphoglucan phosphatase DSP4, amyloplastic (375 aa).

An amyloplast-targeting transit peptide spans 1–42; the sequence is MFCVQNLPRSSALPLQSFKSHQRRPPCSVNTLGVMSNVNLHR. Positions 49 to 71 are disordered; it reads ISGPTSSAETSDANVEEEKSETY. Polar residues predominate over residues 51-61; the sequence is GPTSSAETSDA. Positions 92–249 constitute a Tyrosine-protein phosphatase domain; sequence NYNFIRPDLI…AADILTGLRK (158 aa). Catalysis depends on Cys193, which acts as the Phosphocysteine intermediate. 194–199 contacts substrate; sequence TAGLGR. Residues 254–330 form a polysaccharide binding region; it reads LTWKNPDCTT…NKDGHVNNFV (77 aa).

Expressed in phloem parenchyma of 16-24 week old seedlings and 2 year old trees (at protein level). Expressed in leaves of 16-24 week old seedlings and 2 year old trees.

The protein localises to the plastid. It localises to the amyloplast. It is found in the nucleus. Its function is as follows. Starch granule-associated phosphoglucan phosphatase involved in the control of starch accumulation. Acts as a major regulator of the initial steps of starch degradation at the granule surface. Functions during the day by dephosphorylating the night-accumulated phospho-oligosaccharides. Can release phosphate from both the C6 and the C3 positions. The chain is Phosphoglucan phosphatase DSP4, amyloplastic from Castanea sativa (Sweet chestnut).